The chain runs to 192 residues: Nucleosome assembly protein 1-like 5 (192 aa).

A compositionally biased stretch (polar residues) spans 1 to 12 (MADSQNQGSAEP). The tract at residues 1 to 76 (MADSQNQGSA…APKPRNDFIE (76 aa)) is disordered. Low complexity-rich tracts occupy residues 15 to 28 (AAAA…AAAA) and 40 to 55 (GDSD…VVGQ). The stretch at 86–112 (VLALKKLQKRCDKIEAKFDKEFQALEK) forms a coiled coil. The segment at 136 to 192 (AWTLEGDEEDDDDDEYEDEEEGEEEDEEEEEPAAEAAGTAAAKDEGPHSAVPDDAKK) is disordered. Residues 140 to 168 (EGDEEDDDDDEYEDEEEGEEEDEEEEEPA) are compositionally biased toward acidic residues. Positions 177 to 192 (AKDEGPHSAVPDDAKK) are enriched in basic and acidic residues.

Belongs to the nucleosome assembly protein (NAP) family.

The protein localises to the nucleus. The polypeptide is Nucleosome assembly protein 1-like 5 (NAP1L5) (Bos taurus (Bovine)).